The sequence spans 83 residues: Cytochrome b559 subunit alpha (83 aa).

Residues V21–W35 traverse the membrane as a helical segment. Residue H23 coordinates heme.

This sequence belongs to the PsbE/PsbF family. Heterodimer of an alpha subunit and a beta subunit. PSII is composed of 1 copy each of membrane proteins PsbA, PsbB, PsbC, PsbD, PsbE, PsbF, PsbH, PsbI, PsbJ, PsbK, PsbL, PsbM, PsbT, PsbX, PsbY, PsbZ, Psb30/Ycf12, at least 3 peripheral proteins of the oxygen-evolving complex and a large number of cofactors. It forms dimeric complexes. Heme b is required as a cofactor.

It is found in the plastid. Its subcellular location is the chloroplast thylakoid membrane. Its function is as follows. This b-type cytochrome is tightly associated with the reaction center of photosystem II (PSII). PSII is a light-driven water:plastoquinone oxidoreductase that uses light energy to abstract electrons from H(2)O, generating O(2) and a proton gradient subsequently used for ATP formation. It consists of a core antenna complex that captures photons, and an electron transfer chain that converts photonic excitation into a charge separation. In Oltmannsiellopsis viridis (Marine flagellate), this protein is Cytochrome b559 subunit alpha.